A 490-amino-acid polypeptide reads, in one-letter code: Protein nucleotidyltransferase YdiU (490 aa).

Residues glycine 92, glycine 94, arginine 95, lysine 114, aspartate 126, glycine 127, arginine 177, and arginine 184 each contribute to the ATP site. The Proton acceptor role is filled by aspartate 256. Mg(2+) contacts are provided by asparagine 257 and aspartate 266. Aspartate 266 contacts ATP.

It belongs to the SELO family. Mg(2+) is required as a cofactor. It depends on Mn(2+) as a cofactor.

It catalyses the reaction L-seryl-[protein] + ATP = 3-O-(5'-adenylyl)-L-seryl-[protein] + diphosphate. The catalysed reaction is L-threonyl-[protein] + ATP = 3-O-(5'-adenylyl)-L-threonyl-[protein] + diphosphate. The enzyme catalyses L-tyrosyl-[protein] + ATP = O-(5'-adenylyl)-L-tyrosyl-[protein] + diphosphate. It carries out the reaction L-histidyl-[protein] + UTP = N(tele)-(5'-uridylyl)-L-histidyl-[protein] + diphosphate. It catalyses the reaction L-seryl-[protein] + UTP = O-(5'-uridylyl)-L-seryl-[protein] + diphosphate. The catalysed reaction is L-tyrosyl-[protein] + UTP = O-(5'-uridylyl)-L-tyrosyl-[protein] + diphosphate. Its function is as follows. Nucleotidyltransferase involved in the post-translational modification of proteins. It can catalyze the addition of adenosine monophosphate (AMP) or uridine monophosphate (UMP) to a protein, resulting in modifications known as AMPylation and UMPylation. This is Protein nucleotidyltransferase YdiU from Bordetella avium (strain 197N).